Consider the following 721-residue polypeptide: DNA ligase (721 aa).

Residues 42–46 (DAEYD), 91–92 (SL), and glutamate 125 contribute to the NAD(+) site. The N6-AMP-lysine intermediate role is filled by lysine 127. Residues arginine 148, glutamate 184, lysine 300, and lysine 324 each coordinate NAD(+). 4 residues coordinate Zn(2+): cysteine 430, cysteine 433, cysteine 448, and cysteine 454. In terms of domain architecture, BRCT spans 642–721 (STGSPVEGKT…DAWFTLVGEE (80 aa)).

It belongs to the NAD-dependent DNA ligase family. LigA subfamily. It depends on Mg(2+) as a cofactor. The cofactor is Mn(2+).

It catalyses the reaction NAD(+) + (deoxyribonucleotide)n-3'-hydroxyl + 5'-phospho-(deoxyribonucleotide)m = (deoxyribonucleotide)n+m + AMP + beta-nicotinamide D-nucleotide.. Functionally, DNA ligase that catalyzes the formation of phosphodiester linkages between 5'-phosphoryl and 3'-hydroxyl groups in double-stranded DNA using NAD as a coenzyme and as the energy source for the reaction. It is essential for DNA replication and repair of damaged DNA. This is DNA ligase from Brucella anthropi (strain ATCC 49188 / DSM 6882 / CCUG 24695 / JCM 21032 / LMG 3331 / NBRC 15819 / NCTC 12168 / Alc 37) (Ochrobactrum anthropi).